Here is a 155-residue protein sequence, read N- to C-terminus: Transcriptional repressor NrdR (155 aa).

The span at methionine 1–serine 11 shows a compositional bias: polar residues. Residues methionine 1–asparagine 22 are disordered. Residues cysteine 3–cysteine 34 fold into a zinc finger. An ATP-cone domain is found at leucine 49–serine 139.

Belongs to the NrdR family. The cofactor is Zn(2+).

In terms of biological role, negatively regulates transcription of bacterial ribonucleotide reductase nrd genes and operons by binding to NrdR-boxes. In Lactobacillus acidophilus (strain ATCC 700396 / NCK56 / N2 / NCFM), this protein is Transcriptional repressor NrdR.